The following is a 990-amino-acid chain: Bifunctional glutamine synthetase adenylyltransferase/adenylyl-removing enzyme (990 aa).

The segment at 1–474 is adenylyl removase; sequence MIFSAITADL…HYAKLFEGDP (474 aa). The segment at 478 to 990 is adenylyl transferase; the sequence is AKLPPVDYGA…FSRLIGGEDA (513 aa).

The protein belongs to the GlnE family. Mg(2+) is required as a cofactor.

The enzyme catalyses [glutamine synthetase]-O(4)-(5'-adenylyl)-L-tyrosine + phosphate = [glutamine synthetase]-L-tyrosine + ADP. It carries out the reaction [glutamine synthetase]-L-tyrosine + ATP = [glutamine synthetase]-O(4)-(5'-adenylyl)-L-tyrosine + diphosphate. In terms of biological role, involved in the regulation of glutamine synthetase GlnA, a key enzyme in the process to assimilate ammonia. When cellular nitrogen levels are high, the C-terminal adenylyl transferase (AT) inactivates GlnA by covalent transfer of an adenylyl group from ATP to specific tyrosine residue of GlnA, thus reducing its activity. Conversely, when nitrogen levels are low, the N-terminal adenylyl removase (AR) activates GlnA by removing the adenylyl group by phosphorolysis, increasing its activity. The regulatory region of GlnE binds the signal transduction protein PII (GlnB) which indicates the nitrogen status of the cell. This Rhodopseudomonas palustris (strain ATCC BAA-98 / CGA009) protein is Bifunctional glutamine synthetase adenylyltransferase/adenylyl-removing enzyme.